Reading from the N-terminus, the 212-residue chain is uncharacterized protein (212 aa).

A helical membrane pass occupies residues 186-206 (VITLISFMLFSILFFLIFLIV).

It localises to the membrane. This is an uncharacterized protein from Mycoplasma genitalium (strain ATCC 33530 / DSM 19775 / NCTC 10195 / G37) (Mycoplasmoides genitalium).